Here is a 215-residue protein sequence, read N- to C-terminus: Pyrrolidone-carboxylate peptidase (215 aa).

Active-site residues include Glu80, Cys143, and His167.

Belongs to the peptidase C15 family. As to quaternary structure, homotetramer.

Its subcellular location is the cytoplasm. It carries out the reaction Release of an N-terminal pyroglutamyl group from a polypeptide, the second amino acid generally not being Pro.. Its function is as follows. Removes 5-oxoproline from various penultimate amino acid residues except L-proline. In Yersinia pseudotuberculosis serotype O:1b (strain IP 31758), this protein is Pyrrolidone-carboxylate peptidase.